The following is a 330-amino-acid chain: GTP 3',8-cyclase (330 aa).

Positions 14-225 (RFGRTVDYVR…RERLADAYPE (212 aa)) constitute a Radical SAM core domain. Residue Arg23 coordinates GTP. Residues Cys30 and Cys34 each coordinate [4Fe-4S] cluster. Tyr36 serves as a coordination point for S-adenosyl-L-methionine. Cys37 contributes to the [4Fe-4S] cluster binding site. Arg70 is a GTP binding site. Residue Gly74 coordinates S-adenosyl-L-methionine. Position 101 (Thr101) interacts with GTP. Position 125 (Ser125) interacts with S-adenosyl-L-methionine. Lys162 is a binding site for GTP. The [4Fe-4S] cluster site is built by Cys259 and Cys262. 264-266 (KLR) lines the GTP pocket. Residue Cys276 participates in [4Fe-4S] cluster binding. Basic and acidic residues predominate over residues 309–318 (KPKDGLKSSH). The segment at 309 to 330 (KPKDGLKSSHDTAASSMSQIGG) is disordered. A compositionally biased stretch (polar residues) spans 319–330 (DTAASSMSQIGG).

The protein belongs to the radical SAM superfamily. MoaA family. Monomer and homodimer. It depends on [4Fe-4S] cluster as a cofactor.

The catalysed reaction is GTP + AH2 + S-adenosyl-L-methionine = (8S)-3',8-cyclo-7,8-dihydroguanosine 5'-triphosphate + 5'-deoxyadenosine + L-methionine + A + H(+). It participates in cofactor biosynthesis; molybdopterin biosynthesis. In terms of biological role, catalyzes the cyclization of GTP to (8S)-3',8-cyclo-7,8-dihydroguanosine 5'-triphosphate. This is GTP 3',8-cyclase from Chlorobaculum tepidum (strain ATCC 49652 / DSM 12025 / NBRC 103806 / TLS) (Chlorobium tepidum).